The chain runs to 164 residues: V-type proton ATPase 16 kDa proteolipid subunit (164 aa).

Residues 1–9 (MSNFAGDET) are Lumenal-facing. The helical transmembrane segment at 10 to 32 (APFFGFLGAAAALVFSCMGAAYG) threads the bilayer. The Cytoplasmic portion of the chain corresponds to 33-54 (TAKSGVGVASMGVMRPELVMKS). Residues 55 to 75 (IVPVVMAGVLGIYGLIIAVII) form a helical membrane-spanning segment. Over 76 to 94 (STGINPKTKSYYLFDGYAH) the chain is Lumenal. Residues 95–116 (LSSGLACGLAGLSAGMAIGIVG) form a helical membrane-spanning segment. Over 117 to 128 (DAGVRANAQQPK) the chain is Cytoplasmic. A helical membrane pass occupies residues 129-154 (LFVGMILILIFAEALALYGLIVGIIL). Residues 155-164 (SSRAGQSRAE) are Lumenal-facing.

This sequence belongs to the V-ATPase proteolipid subunit family. As to quaternary structure, V-ATPase is a heteromultimeric enzyme composed of a peripheral catalytic V1 complex (main components: subunits A, B, C, D, E, and F) attached to an integral membrane V0 proton pore complex (main component: the proteolipid protein; which is present as a hexamer that forms the proton-conducting pore).

The protein resides in the vacuole membrane. In terms of biological role, proton-conducting pore forming subunit of the membrane integral V0 complex of vacuolar ATPase. V-ATPase is responsible for acidifying a variety of intracellular compartments in eukaryotic cells. This is V-type proton ATPase 16 kDa proteolipid subunit from Solanum lycopersicum (Tomato).